The sequence spans 360 residues: Dihydroorotate dehydrogenase (quinone) (360 aa).

Residues 67 to 71 (AGLDK) and Thr91 each bind FMN. Lys71 is a substrate binding site. A substrate-binding site is contributed by 116-120 (NRMGF). The FMN site is built by Asn145 and Asn176. Residue Asn176 participates in substrate binding. The Nucleophile role is filled by Ser179. Asn181 provides a ligand contact to substrate. Residues Lys222 and Ser250 each coordinate FMN. 251 to 252 (NT) lines the substrate pocket. FMN contacts are provided by residues Gly272, Gly301, and 322 to 323 (YS).

This sequence belongs to the dihydroorotate dehydrogenase family. Type 2 subfamily. As to quaternary structure, monomer. The cofactor is FMN.

The protein localises to the cell membrane. It catalyses the reaction (S)-dihydroorotate + a quinone = orotate + a quinol. The protein operates within pyrimidine metabolism; UMP biosynthesis via de novo pathway; orotate from (S)-dihydroorotate (quinone route): step 1/1. In terms of biological role, catalyzes the conversion of dihydroorotate to orotate with quinone as electron acceptor. The protein is Dihydroorotate dehydrogenase (quinone) of Deinococcus deserti (strain DSM 17065 / CIP 109153 / LMG 22923 / VCD115).